The following is a 504-amino-acid chain: Probable cytosol aminopeptidase (504 aa).

Positions 268 and 273 each coordinate Mn(2+). The active site involves lysine 280. Residues aspartate 291, aspartate 350, and glutamate 352 each contribute to the Mn(2+) site. Arginine 354 is a catalytic residue.

The protein belongs to the peptidase M17 family. Requires Mn(2+) as cofactor.

The protein localises to the cytoplasm. It catalyses the reaction Release of an N-terminal amino acid, Xaa-|-Yaa-, in which Xaa is preferably Leu, but may be other amino acids including Pro although not Arg or Lys, and Yaa may be Pro. Amino acid amides and methyl esters are also readily hydrolyzed, but rates on arylamides are exceedingly low.. The enzyme catalyses Release of an N-terminal amino acid, preferentially leucine, but not glutamic or aspartic acids.. In terms of biological role, presumably involved in the processing and regular turnover of intracellular proteins. Catalyzes the removal of unsubstituted N-terminal amino acids from various peptides. The sequence is that of Probable cytosol aminopeptidase from Psychromonas ingrahamii (strain DSM 17664 / CCUG 51855 / 37).